The following is a 366-amino-acid chain: 3-dehydroquinate synthase (366 aa).

NAD(+) contacts are provided by residues Asp-75 to Lys-80, Gly-109 to Asp-113, Thr-133 to Thr-134, Lys-146, Lys-155, and Thr-173 to Thr-176. Zn(2+)-binding residues include Glu-188, His-251, and His-268.

This sequence belongs to the sugar phosphate cyclases superfamily. Dehydroquinate synthase family. Co(2+) serves as cofactor. The cofactor is Zn(2+). NAD(+) is required as a cofactor.

The protein localises to the cytoplasm. The catalysed reaction is 7-phospho-2-dehydro-3-deoxy-D-arabino-heptonate = 3-dehydroquinate + phosphate. It functions in the pathway metabolic intermediate biosynthesis; chorismate biosynthesis; chorismate from D-erythrose 4-phosphate and phosphoenolpyruvate: step 2/7. In terms of biological role, catalyzes the conversion of 3-deoxy-D-arabino-heptulosonate 7-phosphate (DAHP) to dehydroquinate (DHQ). The sequence is that of 3-dehydroquinate synthase from Nitrosospira multiformis (strain ATCC 25196 / NCIMB 11849 / C 71).